The chain runs to 718 residues: Origin of replication complex subunit 3 (718 aa).

Over residues 26 to 43 (GAAASSSSSSAPSLPSSG) the composition is skewed to low complexity. The interval 26–75 (GAAASSSSSSAPSLPSSGRARRRIDVSGLASPNPKPGKRSRDDDAAEDDD) is disordered. A Nuclear localization signal motif is present at residues 659-666 (IKRKPHTS).

This sequence belongs to the ORC3 family. As to quaternary structure, component of the origin recognition complex (ORC) composed of at least ORC1, ORC2, ORC3, ORC4, ORC5 and ORC6. ORC is regulated in a cell-cycle and development dependent manner. It is sequentially assembled at the exit from anaphase of mitosis and disassembled as cells enter S phase. In terms of tissue distribution, expressed at low levels in the shoot apical meristem (SAM), leaves, ears and roots (including root tips).

The protein resides in the nucleus. Functionally, component of the origin recognition complex (ORC) that binds origins of replication. DNA-binding is ATP-dependent. The specific DNA sequences that define origins of replication have not been identified yet. This chain is Origin of replication complex subunit 3, found in Oryza sativa subsp. japonica (Rice).